The sequence spans 379 residues: Queuine tRNA-ribosyltransferase (379 aa).

The active-site Proton acceptor is the D94. Substrate is bound by residues 94–98, D148, Q191, and G218; that span reads DSGGF. An RNA binding region spans residues 249–255; that stretch reads GVGSPDS. The active-site Nucleophile is D268. Residues 273-277 form an RNA binding; important for wobble base 34 recognition region; it reads TRIAR. 4 residues coordinate Zn(2+): C306, C308, C311, and H337.

This sequence belongs to the queuine tRNA-ribosyltransferase family. Homodimer. Within each dimer, one monomer is responsible for RNA recognition and catalysis, while the other monomer binds to the replacement base PreQ1. It depends on Zn(2+) as a cofactor.

The catalysed reaction is 7-aminomethyl-7-carbaguanine + guanosine(34) in tRNA = 7-aminomethyl-7-carbaguanosine(34) in tRNA + guanine. The protein operates within tRNA modification; tRNA-queuosine biosynthesis. Its function is as follows. Catalyzes the base-exchange of a guanine (G) residue with the queuine precursor 7-aminomethyl-7-deazaguanine (PreQ1) at position 34 (anticodon wobble position) in tRNAs with GU(N) anticodons (tRNA-Asp, -Asn, -His and -Tyr). Catalysis occurs through a double-displacement mechanism. The nucleophile active site attacks the C1' of nucleotide 34 to detach the guanine base from the RNA, forming a covalent enzyme-RNA intermediate. The proton acceptor active site deprotonates the incoming PreQ1, allowing a nucleophilic attack on the C1' of the ribose to form the product. After dissociation, two additional enzymatic reactions on the tRNA convert PreQ1 to queuine (Q), resulting in the hypermodified nucleoside queuosine (7-(((4,5-cis-dihydroxy-2-cyclopenten-1-yl)amino)methyl)-7-deazaguanosine). This is Queuine tRNA-ribosyltransferase from Listeria welshimeri serovar 6b (strain ATCC 35897 / DSM 20650 / CCUG 15529 / CIP 8149 / NCTC 11857 / SLCC 5334 / V8).